A 244-amino-acid chain; its full sequence is E3 ubiquitin-protein ligase RNF166 (244 aa).

Residues 10–30 (AQRPQAPGPGPPRPPPPAGPA) are disordered. A compositionally biased stretch (pro residues) spans 15 to 28 (APGPGPPRPPPPAG). An RING-type zinc finger spans residues 40–80 (CPICLEVFHRAVGIAGCGHTFCGECLQPCLQVPSPLCPLCR). Positions 105, 108, 120, and 124 each coordinate Zn(2+). A C2HC RNF-type zinc finger spans residues 105–124 (CRGCSKKVTLAKMRSHVSSC). Residues 228–244 (DEEAALQAALALSLSEN) enclose the UIM domain.

The protein localises to the cytoplasm. It carries out the reaction S-ubiquitinyl-[E2 ubiquitin-conjugating enzyme]-L-cysteine + [acceptor protein]-L-lysine = [E2 ubiquitin-conjugating enzyme]-L-cysteine + N(6)-ubiquitinyl-[acceptor protein]-L-lysine.. Its pathway is protein modification; protein ubiquitination. E3 ubiquitin-protein ligase that promotes the ubiquitination of different substrates. The sequence is that of E3 ubiquitin-protein ligase RNF166 (RNF166) from Gallus gallus (Chicken).